Here is a 496-residue protein sequence, read N- to C-terminus: MAFEKTRQFLPPLHFVLFPFMAQGHMIPMVDIARILAQRGVTITIVTTPHNAARFKDVLNRAIQSGLHIRVEHVKFPFQEAGLQEGQENVDFLDSMELMVHFFKAVNMLENPVMKLMEEMKPKPSCLISDFCLPYTSKIAKRFNIPKIVFHGVSCFCLLSMHILHRNHNILHALKSDKEYFLVPSFPDRVEFTKLQVTVKTNFSGDWKEIMDEQVDADDTSYGVIVNTFQDLESAYVKNYTEARAGKVWSIGPVSLCNKVGEDKAERGNKAAIDQDECIKWLDSKDVESVLYVCLGSICNLPLAQLRELGLGLEATKRPFIWVIRGGGKYHELAEWILESGFEERTKERSLLIKGWSPQMLILSHPAVGGFLTHCGWNSTLEGITSGVPLITWPLFGDQFCNQKLIVQVLKAGVSVGVEEVMKWGEEESIGVLVDKEGVKKAVDEIMGESDEAKERRKRVRELGELAHKAVEEGGSSHSNIIFLLQDIMQQVESKS.

Residues serine 297, 357 to 359 (SPQ), 374 to 382 (HCGWNSTLE), and 396 to 399 (FGDQ) each bind UDP-alpha-D-glucose.

It belongs to the UDP-glycosyltransferase family.

The chain is UDP-glycosyltransferase 73C2 (UGT73C2) from Arabidopsis thaliana (Mouse-ear cress).